The chain runs to 354 residues: Neuronal growth regulator 1 (354 aa).

An N-terminal signal peptide occupies residues 1 to 37 (MDMMLLVQGACCSNQWLAAVLLSLCCLLPSCLPAGQS). 3 consecutive Ig-like C2-type domains span residues 38–134 (VDFP…VHLT), 139–221 (PKIY…KVVV), and 225–313 (PTIQ…LPLN). Cysteine 60 and cysteine 118 are joined by a disulfide. 2 N-linked (GlcNAc...) asparagine glycosylation sites follow: asparagine 73 and asparagine 155. Cystine bridges form between cysteine 160–cysteine 203 and cysteine 245–cysteine 297. Position 187 is a phosphotyrosine (tyrosine 187). N-linked (GlcNAc...) asparagine glycans are attached at residues asparagine 275, asparagine 286, asparagine 294, and asparagine 307. The GPI-anchor amidated glycine moiety is linked to residue glycine 324. Positions 325-354 (SADVLFSCWYLVLTLSSFTSIFYLKNAILQ) are cleaved as a propeptide — removed in mature form.

This sequence belongs to the immunoglobulin superfamily. IgLON family.

Its subcellular location is the cell membrane. Its function is as follows. May be involved in cell-adhesion. May function as a trans-neural growth-promoting factor in regenerative axon sprouting in the mammalian brain. This is Neuronal growth regulator 1 (NEGR1) from Pongo abelii (Sumatran orangutan).